The chain runs to 747 residues: Myotubularin-related protein 12 (747 aa).

Positions 205–643 (FDTLKDWCWE…PEIKVWAQRY (439 aa)) constitute a Myotubularin phosphatase domain. The segment at 449–558 (VPVFLLFLDC…KGQRKGMRFK (110 aa)) is interaction with MTM1. 3 positions are modified to phosphoserine: Ser564, Ser601, and Ser716.

It belongs to the protein-tyrosine phosphatase family. Non-receptor class myotubularin subfamily. As to quaternary structure, heterodimer with lipid phosphatase MTM1. Heterodimer with lipid phosphatase MTMR2. In terms of tissue distribution, expressed in skeletal muscles (at protein level). Ubiquitous with prominent expression in brain, heart, kidney, placenta, and lung.

Its subcellular location is the cytoplasm. The protein localises to the sarcoplasmic reticulum. It localises to the myofibril. The protein resides in the sarcomere. In terms of biological role, acts as an adapter for the myotubularin-related phosphatases. Regulates phosphatase MTM1 protein stability and possibly its intracellular location. By stabilizing MTM1 protein levels, required for skeletal muscle maintenance but not for myogenesis. This chain is Myotubularin-related protein 12 (MTMR12), found in Homo sapiens (Human).